The chain runs to 1638 residues: Ciliary rootlet coiled-coil protein 2 (1638 aa).

The segment covering 1 to 20 has biased composition (polar residues); the sequence is MSSTSSNPDDGDTTEQSQLG. Disordered regions lie at residues 1–21, 39–92, 396–423, and 1168–1213; these read MSST…QLGL, REDR…REES, ARLR…TSLH, and TRRK…NLQE. Over residues 67–82 the composition is skewed to low complexity; that stretch reads SSSLGEEPLSGLREPP. Residues 85-144 adopt a coiled-coil conformation; it reads TSHAREESELLQEELTRLEDLLAQADAEREELASRCHMVSQRLQARLDTTEARLRKSELE. Positions 406–421 are enriched in polar residues; that stretch reads SPHQRMSPARTSSPTS. 2 coiled-coil regions span residues 426–1234 and 1281–1315; these read LQAV…VQKE and LQEA…AEGA. The span at 1180-1193 shows a compositional bias: basic and acidic residues; it reads RTLEAENQRKRQEV. Disordered stretches follow at residues 1338 to 1383 and 1506 to 1551; these read RNLL…VPVD and ALEE…QTTS. The segment covering 1349–1371 has biased composition (polar residues); that stretch reads SPTTGSSQTRPGRQRTSPPTRSY. Coiled-coil stretches lie at residues 1412 to 1506 and 1542 to 1576; these read RDNS…LRQA and RRAL…TEQE.

It belongs to the rootletin family.

The sequence is that of Ciliary rootlet coiled-coil protein 2 from Mus musculus (Mouse).